The following is a 61-amino-acid chain: Small ribosomal subunit protein uS14 (61 aa).

Zn(2+) is bound by residues Cys-24, Cys-27, Cys-40, and Cys-43.

Belongs to the universal ribosomal protein uS14 family. Zinc-binding uS14 subfamily. Part of the 30S ribosomal subunit. Contacts proteins S3 and S10. Requires Zn(2+) as cofactor.

Binds 16S rRNA, required for the assembly of 30S particles and may also be responsible for determining the conformation of the 16S rRNA at the A site. The protein is Small ribosomal subunit protein uS14 of Dehalococcoides mccartyi (strain ATCC BAA-2266 / KCTC 15142 / 195) (Dehalococcoides ethenogenes (strain 195)).